The chain runs to 495 residues: DDB1- and CUL4-associated factor 4 (495 aa).

Positions 1–17 (MNKSRWQSRRRHGRRSH) are enriched in basic residues. Positions 1-66 (MNKSRWQSRR…TAGTSSVPEL (66 aa)) are disordered. Basic and acidic residues predominate over residues 24-34 (RLRDSEDRSDS). Residues 51 to 62 (PSTSSGTAGTSS) show a composition bias toward low complexity. WD repeat units lie at residues 368-407 (FHDS…CVRQ) and 410-451 (GHVN…LLRT).

Interacts with DDB1 and CUL4A.

Its pathway is protein modification; protein ubiquitination. Its function is as follows. May function as a substrate receptor for CUL4-DDB1 E3 ubiquitin-protein ligase complex. The chain is DDB1- and CUL4-associated factor 4 (DCAF4) from Homo sapiens (Human).